The following is a 167-amino-acid chain: Large ribosomal subunit protein uL10 (167 aa).

It belongs to the universal ribosomal protein uL10 family. As to quaternary structure, part of the ribosomal stalk of the 50S ribosomal subunit. The N-terminus interacts with L11 and the large rRNA to form the base of the stalk. The C-terminus forms an elongated spine to which L12 dimers bind in a sequential fashion forming a multimeric L10(L12)X complex.

Its function is as follows. Forms part of the ribosomal stalk, playing a central role in the interaction of the ribosome with GTP-bound translation factors. The sequence is that of Large ribosomal subunit protein uL10 from Erwinia tasmaniensis (strain DSM 17950 / CFBP 7177 / CIP 109463 / NCPPB 4357 / Et1/99).